A 395-amino-acid chain; its full sequence is Vomeronasal type-1 receptor 2 (395 aa).

The helical transmembrane segment at 12-32 (LYPINISAAWHLGPLPVSCFV) threads the bilayer. The Extracellular segment spans residues 33–51 (SNKYQCSLAFGATTGLRVL). The chain crosses the membrane as a helical span at residues 52–72 (VVVVPQTQLSFLSSLCLVSLF). Residues 73–93 (LHSLVSAHGEKPTKPVGLDPT) are Cytoplasmic-facing. A helical membrane pass occupies residues 94–114 (LFQVVVGILGNFSLLYYYMFL). Over 115–170 (YFRGYKPRSTDLILRHLTVADSLVILSKRIPETMATFGLKHFDNYFGCKFLLYAHR) the chain is Extracellular. The chain crosses the membrane as a helical span at residues 171–191 (VGRGVSIGSTCLLSVFQVITI). The Cytoplasmic portion of the chain corresponds to 192-208 (NPRNSRWAEMKVKAPTY). A helical membrane pass occupies residues 209–229 (IGLSNILCWAFHMLVNAIFPI). Topologically, residues 230 to 267 (YTTGKWSNNNITKKGDLGYCSAPLSDEVTKSVYAALTS) are extracellular. Residue Asn-239 is glycosylated (N-linked (GlcNAc...) asparagine). The helical transmembrane segment at 268–288 (FHDVLCLGLMLWASSSIVLVL) threads the bilayer. At 289 to 316 (YRHKQQVQHICRNNLYPNSSPGNRAIQS) the chain is on the cytoplasmic side. The chain crosses the membrane as a helical span at residues 317–337 (ILALVSTFALCYALSFITYVY). The Extracellular portion of the chain corresponds to 338 to 346 (LALFDNSSW). An N-linked (GlcNAc...) asparagine glycan is attached at Asn-343. The chain crosses the membrane as a helical span at residues 347-367 (WLVNTAALIIACFPTISPFVL). The Cytoplasmic segment spans residues 368–395 (MCRDPSRSRLCSICCRRNRRFFHDFRKM).

Belongs to the G-protein coupled receptor 1 family.

It is found in the cell membrane. In terms of biological role, putative pheromone receptor. This Homo sapiens (Human) protein is Vomeronasal type-1 receptor 2 (VN1R2).